A 336-amino-acid chain; its full sequence is Dihydroorotate dehydrogenase (quinone) (336 aa).

Residues alanine 62–lysine 66 and threonine 86 contribute to the FMN site. A substrate-binding site is contributed by lysine 66. Asparagine 111–phenylalanine 115 serves as a coordination point for substrate. FMN-binding residues include asparagine 139 and asparagine 172. Substrate is bound at residue asparagine 172. Serine 175 acts as the Nucleophile in catalysis. Asparagine 177 serves as a coordination point for substrate. FMN-binding residues include lysine 217 and threonine 245. Residue asparagine 246–threonine 247 coordinates substrate. FMN-binding positions include glycine 268, glycine 297, and tyrosine 318–serine 319.

Belongs to the dihydroorotate dehydrogenase family. Type 2 subfamily. In terms of assembly, monomer. Requires FMN as cofactor.

It is found in the cell membrane. It carries out the reaction (S)-dihydroorotate + a quinone = orotate + a quinol. The protein operates within pyrimidine metabolism; UMP biosynthesis via de novo pathway; orotate from (S)-dihydroorotate (quinone route): step 1/1. Catalyzes the conversion of dihydroorotate to orotate with quinone as electron acceptor. This Baumannia cicadellinicola subsp. Homalodisca coagulata protein is Dihydroorotate dehydrogenase (quinone).